A 689-amino-acid chain; its full sequence is Glycine--tRNA ligase beta subunit (689 aa).

This sequence belongs to the class-II aminoacyl-tRNA synthetase family. As to quaternary structure, tetramer of two alpha and two beta subunits.

The protein localises to the cytoplasm. The catalysed reaction is tRNA(Gly) + glycine + ATP = glycyl-tRNA(Gly) + AMP + diphosphate. The protein is Glycine--tRNA ligase beta subunit of Pectobacterium atrosepticum (strain SCRI 1043 / ATCC BAA-672) (Erwinia carotovora subsp. atroseptica).